Reading from the N-terminus, the 484-residue chain is Probable cytochrome P450 508A1 (484 aa).

A helical membrane pass occupies residues 1–21; the sequence is MALFEIIISLFVVYIIHNAIS. Cysteine 428 serves as a coordination point for heme.

This sequence belongs to the cytochrome P450 family. It depends on heme as a cofactor.

Its subcellular location is the membrane. This chain is Probable cytochrome P450 508A1 (cyp508A1-1), found in Dictyostelium discoideum (Social amoeba).